The sequence spans 314 residues: GMP synthase [glutamine-hydrolyzing] subunit B (314 aa).

In terms of domain architecture, GMPS ATP-PPase spans 2-186 (FDPKKFVEEA…LGIPDEIVER (185 aa)). 29-35 (SGGVDST) is a binding site for ATP.

As to quaternary structure, heterodimer composed of a glutamine amidotransferase subunit (A) and a GMP-binding subunit (B).

It catalyses the reaction XMP + L-glutamine + ATP + H2O = GMP + L-glutamate + AMP + diphosphate + 2 H(+). Its pathway is purine metabolism; GMP biosynthesis; GMP from XMP (L-Gln route): step 1/1. In terms of biological role, catalyzes the synthesis of GMP from XMP. The sequence is that of GMP synthase [glutamine-hydrolyzing] subunit B (guaAB) from Methanopyrus kandleri (strain AV19 / DSM 6324 / JCM 9639 / NBRC 100938).